The sequence spans 72 residues: Translation initiation factor IF-1 (72 aa).

An S1-like domain is found at 1 to 72 (MAKEDSIEMQ…TKGRIIFRAR (72 aa)).

The protein belongs to the IF-1 family. Component of the 30S ribosomal translation pre-initiation complex which assembles on the 30S ribosome in the order IF-2 and IF-3, IF-1 and N-formylmethionyl-tRNA(fMet); mRNA recruitment can occur at any time during PIC assembly.

The protein localises to the cytoplasm. In terms of biological role, one of the essential components for the initiation of protein synthesis. Stabilizes the binding of IF-2 and IF-3 on the 30S subunit to which N-formylmethionyl-tRNA(fMet) subsequently binds. Helps modulate mRNA selection, yielding the 30S pre-initiation complex (PIC). Upon addition of the 50S ribosomal subunit IF-1, IF-2 and IF-3 are released leaving the mature 70S translation initiation complex. The polypeptide is Translation initiation factor IF-1 (Actinobacillus succinogenes (strain ATCC 55618 / DSM 22257 / CCUG 43843 / 130Z)).